Reading from the N-terminus, the 360-residue chain is Serine/threonine-protein phosphatase 2A activator 2 (360 aa).

The protein belongs to the PTPA-type PPIase family.

The protein localises to the cytoplasm. The catalysed reaction is [protein]-peptidylproline (omega=180) = [protein]-peptidylproline (omega=0). Its function is as follows. PPIases accelerate the folding of proteins. It catalyzes the cis-trans isomerization of proline imidic peptide bonds in oligopeptides. Acts as a regulatory subunit for PP2A-like phosphatases modulating their activity or substrate specificity, probably by inducing a conformational change in the catalytic subunit, a direct target of the PPIase. Can reactivate inactive phosphatase PP2A-phosphatase methylesterase complexes (PP2Ai) in presence of ATP and Mg(2+) by dissociating the inactive form from the complex. The sequence is that of Serine/threonine-protein phosphatase 2A activator 2 (RRD2) from Kluyveromyces lactis (strain ATCC 8585 / CBS 2359 / DSM 70799 / NBRC 1267 / NRRL Y-1140 / WM37) (Yeast).